A 347-amino-acid polypeptide reads, in one-letter code: Outer membrane protein A (347 aa).

The signal sequence occupies residues 1-21 (MKKQALTIIFLLVSLVTGIQA). A run of 8 beta stranded transmembrane segments spans residues 26-36 (HWYLGTKMGWS), 63-74 (APVFGLFLGYEF), 78-86 (FSFEIENDT), 105-116 (NSLQLATKLSYP), 121-129 (FHIYTQLGG), 154-163 (PNVSLGAEYI), 168-175 (FITRLDYT), and 194-202 (DVALSFGWK). A hinge-like region spans residues 207-218 (NINEIFSSYIPQ). The 128-residue stretch at 220 to 347 (SDKQYVALNE…RRVEIEVLSD (128 aa)) folds into the OmpA-like domain. A disulfide bridge links cysteine 321 with cysteine 333.

The protein belongs to the outer membrane OOP (TC 1.B.6) superfamily. OmpA family. In terms of assembly, monomer and homodimer.

The protein resides in the cell outer membrane. Its function is as follows. With TolR probably plays a role in maintaining the position of the peptidoglycan cell wall in the periplasm. Acts as a porin with low permeability that allows slow penetration of small solutes; an internal gate slows down solute passage. In Buchnera aphidicola subsp. Schizaphis graminum (strain Sg), this protein is Outer membrane protein A.